We begin with the raw amino-acid sequence, 496 residues long: RNA-binding motif protein, Y chromosome, family 1 member E (496 aa).

Residues 8–85 enclose the RRM domain; the sequence is GKLFIGGLNR…KAIKVEQAKK (78 aa). Disordered stretches follow at residues 67 to 348 and 453 to 496; these read DMNG…PHRD and DQRN…SSRY. Low complexity-rich tracts occupy residues 97–114 and 149–159; these read PASS…SARG and PVKRGPSSRSG. Over residues 175 to 184 the composition is skewed to polar residues; the sequence is NSWMGSQGPM. Basic and acidic residues-rich tracts occupy residues 204–214, 242–253, 276–289, 313–326, 335–348, and 484–496; these read RNDRMSTRHDG, DNGHSNRDEHSS, AYRD…DESY, GYRD…HESY, SSRE…PHRD, and GESR…SSRY.

In terms of assembly, interacts with splicing factor proteins SFRS3/SRP20, TRA2B/SFRS10, KHDRBS1/SAM68 and KHDRBS3. In terms of tissue distribution, testis-specific.

Its subcellular location is the nucleus. In terms of biological role, RNA-binding protein which may be involved in spermatogenesis. Required for sperm development, possibly by participating in pre-mRNA splicing in the testis. The protein is RNA-binding motif protein, Y chromosome, family 1 member E (RBMY1E) of Homo sapiens (Human).